A 167-amino-acid chain; its full sequence is Leukotoxin-activating lysine-acyltransferase LktC serotype A1 (167 aa).

Active-site residues include histidine 22 and aspartate 91.

Belongs to the RTX toxin acyltransferase family.

It localises to the cytoplasm. It catalyses the reaction a fatty acyl-[ACP] + L-lysyl-[protein] = N(6)-(fatty acyl)-L-lysyl-[protein] + holo-[ACP] + H(+). Its function is as follows. Involved in fatty acylation of the protoxin (LktA) at two internal lysine residues, thereby converting it to the active toxin. The protein is Leukotoxin-activating lysine-acyltransferase LktC serotype A1 (lktC) of Mannheimia haemolytica (Pasteurella haemolytica).